A 499-amino-acid chain; its full sequence is Rhamnogalacturonan I rhamnosyltransferase 1 (499 aa).

A helical; Signal-anchor for type II membrane protein transmembrane segment spans residues 31 to 50; the sequence is WFVRVCSSILVWTCLVQLFA. N-linked (GlcNAc...) asparagine glycosylation is found at N88, N121, and N207. Substrate is bound at residue 261–263; sequence HLR. Residues N375, N435, and N496 are each glycosylated (N-linked (GlcNAc...) asparagine).

The protein belongs to the glycosyltransferase GT106 family.

The protein resides in the golgi apparatus membrane. It catalyses the reaction alpha-D-galacturonosyl-[(1-&gt;2)-alpha-L-rhamnosyl-(1-&gt;4)-alpha-D-galacturonosyl](n) + UDP-beta-L-rhamnose = [(1-&gt;2)-alpha-L-rhamnosyl-(1-&gt;4)-alpha-D-galacturonosyl](n+1) + UDP + H(+). It participates in glycan metabolism; pectin biosynthesis. In terms of biological role, glycosyltransferase involved in the formation of rhamnogalacturonan I (RG-I) oligosaccharides in the seed coat mucilage, which is a specialized cell wall with abundant RG-I. Transfers the rhamnose residue from UDP-beta-L-rhamnose to RG-I oligosaccharides. This Arabidopsis thaliana (Mouse-ear cress) protein is Rhamnogalacturonan I rhamnosyltransferase 1.